We begin with the raw amino-acid sequence, 409 residues long: ORC1-type DNA replication protein 1 (409 aa).

Residues 63–67 (TGKTA), Tyr206, and Arg218 each bind ATP.

It belongs to the CDC6/cdc18 family.

Its function is as follows. Involved in regulation of DNA replication. The sequence is that of ORC1-type DNA replication protein 1 (cdc6-1) from Archaeoglobus fulgidus (strain ATCC 49558 / DSM 4304 / JCM 9628 / NBRC 100126 / VC-16).